The primary structure comprises 107 residues: UPF0060 membrane protein PSHAa1175 (107 aa).

4 helical membrane passes run 3–23, 30–50, 60–80, and 84–104; these read IFGL…LPYL, SVWL…LLSL, AAYG…VDGI, and TWDL…MFAP.

The protein belongs to the UPF0060 family.

The protein resides in the cell inner membrane. The protein is UPF0060 membrane protein PSHAa1175 of Pseudoalteromonas translucida (strain TAC 125).